The following is a 198-amino-acid chain: ATP-dependent Clp protease proteolytic subunit (198 aa).

Serine 98 (nucleophile) is an active-site residue. Histidine 123 is a catalytic residue.

This sequence belongs to the peptidase S14 family. As to quaternary structure, fourteen ClpP subunits assemble into 2 heptameric rings which stack back to back to give a disk-like structure with a central cavity, resembling the structure of eukaryotic proteasomes.

Its subcellular location is the cytoplasm. It catalyses the reaction Hydrolysis of proteins to small peptides in the presence of ATP and magnesium. alpha-casein is the usual test substrate. In the absence of ATP, only oligopeptides shorter than five residues are hydrolyzed (such as succinyl-Leu-Tyr-|-NHMec, and Leu-Tyr-Leu-|-Tyr-Trp, in which cleavage of the -Tyr-|-Leu- and -Tyr-|-Trp bonds also occurs).. Functionally, cleaves peptides in various proteins in a process that requires ATP hydrolysis. Has a chymotrypsin-like activity. Plays a major role in the degradation of misfolded proteins. The protein is ATP-dependent Clp protease proteolytic subunit of Halothermothrix orenii (strain H 168 / OCM 544 / DSM 9562).